Here is a 72-residue protein sequence, read N- to C-terminus: Variant surface glycoprotein MITAT 1.1000BC (72 aa).

Asp50 carries GPI-anchor amidated aspartate lipidation. Residues 51–72 constitute a propeptide, removed in mature form; that stretch reads GSFLVNKKFALMVYDFVSLLAF.

The protein localises to the cell membrane. In terms of biological role, VSG forms a coat on the surface of the parasite. The trypanosome evades the immune response of the host by expressing a series of antigenically distinct VSGs from an estimated 1000 VSG genes. The protein is Variant surface glycoprotein MITAT 1.1000BC of Trypanosoma brucei brucei.